Consider the following 522-residue polypeptide: F-box/LRR-repeat protein 16 (522 aa).

Residues Tyr38–Leu84 enclose the F-box domain. LRR repeat units lie at residues Ser115 to Gly140, Cys141 to Ser166, Phe169 to Arg191, Arg266 to Lys290, Thr291 to Gly316, Val319 to Gly344, Thr348 to Gly369, Ser370 to Ile393, Gly395 to Lys420, and Cys421 to Glu447.

This Arabidopsis thaliana (Mouse-ear cress) protein is F-box/LRR-repeat protein 16 (FBL16).